A 209-amino-acid polypeptide reads, in one-letter code: Kunitz trypsin inhibitor 1 (209 aa).

The signal sequence occupies residues 1-22 (MKATISITTIFLVVALAAPSLA). Intrachain disulfides connect Cys-63/Cys-107 and Cys-154/Cys-162. A glycan (N-linked (GlcNAc...) asparagine) is linked at Asn-156.

Belongs to the protease inhibitor I3 (leguminous Kunitz-type inhibitor) family.

Functionally, exhibits Kunitz trypsin protease inhibitor activity. The polypeptide is Kunitz trypsin inhibitor 1 (Arabidopsis thaliana (Mouse-ear cress)).